The following is a 259-amino-acid chain: Dihydroorotate dehydrogenase B (NAD(+)), electron transfer subunit (259 aa).

Positions 3 to 103 (KKQGRLTIVK…LGPLGQGFPL (101 aa)) constitute an FAD-binding FR-type domain. Residues 54-57 (RPIS), 71-73 (IYR), and 78-79 (GT) each bind FAD. [2Fe-2S] cluster-binding residues include C222, C227, C230, and C246.

Belongs to the PyrK family. As to quaternary structure, heterotetramer of 2 PyrK and 2 PyrD type B subunits. [2Fe-2S] cluster serves as cofactor. Requires FAD as cofactor.

Its pathway is pyrimidine metabolism; UMP biosynthesis via de novo pathway; orotate from (S)-dihydroorotate (NAD(+) route): step 1/1. Responsible for channeling the electrons from the oxidation of dihydroorotate from the FMN redox center in the PyrD type B subunit to the ultimate electron acceptor NAD(+). The chain is Dihydroorotate dehydrogenase B (NAD(+)), electron transfer subunit from Shouchella clausii (strain KSM-K16) (Alkalihalobacillus clausii).